Here is a 203-residue protein sequence, read N- to C-terminus: Holliday junction branch migration complex subunit RuvA (203 aa).

The tract at residues 1–64 (MIGRLRGIIL…EDAQLLYGFN (64 aa)) is domain I. The tract at residues 65 to 142 (NKQERMLFRE…KGLHGDLFTP (78 aa)) is domain II. The interval 143–154 (AADLVLTSPNGP) is flexible linker. The tract at residues 155-203 (TSDDAEQEAVAALVALGYKPQEASRMVSKIAKPDANSETLIREALRAAL) is domain III.

This sequence belongs to the RuvA family. As to quaternary structure, homotetramer. Forms an RuvA(8)-RuvB(12)-Holliday junction (HJ) complex. HJ DNA is sandwiched between 2 RuvA tetramers; dsDNA enters through RuvA and exits via RuvB. An RuvB hexamer assembles on each DNA strand where it exits the tetramer. Each RuvB hexamer is contacted by two RuvA subunits (via domain III) on 2 adjacent RuvB subunits; this complex drives branch migration. In the full resolvosome a probable DNA-RuvA(4)-RuvB(12)-RuvC(2) complex forms which resolves the HJ.

Its subcellular location is the cytoplasm. The RuvA-RuvB-RuvC complex processes Holliday junction (HJ) DNA during genetic recombination and DNA repair, while the RuvA-RuvB complex plays an important role in the rescue of blocked DNA replication forks via replication fork reversal (RFR). RuvA specifically binds to HJ cruciform DNA, conferring on it an open structure. The RuvB hexamer acts as an ATP-dependent pump, pulling dsDNA into and through the RuvAB complex. HJ branch migration allows RuvC to scan DNA until it finds its consensus sequence, where it cleaves and resolves the cruciform DNA. This is Holliday junction branch migration complex subunit RuvA from Enterobacter sp. (strain 638).